A 309-amino-acid polypeptide reads, in one-letter code: Homoserine kinase (309 aa).

95-105 (PQSRGLGSSAA) provides a ligand contact to ATP.

This sequence belongs to the GHMP kinase family. Homoserine kinase subfamily.

It localises to the cytoplasm. It catalyses the reaction L-homoserine + ATP = O-phospho-L-homoserine + ADP + H(+). It functions in the pathway amino-acid biosynthesis; L-threonine biosynthesis; L-threonine from L-aspartate: step 4/5. Its function is as follows. Catalyzes the ATP-dependent phosphorylation of L-homoserine to L-homoserine phosphate. The chain is Homoserine kinase from Corynebacterium efficiens (strain DSM 44549 / YS-314 / AJ 12310 / JCM 11189 / NBRC 100395).